A 103-amino-acid chain; its full sequence is Putative ribosomal RNA-processing protein 7 homolog B (103 aa).

Over residues 1–19 (MEAYDQKIAEEEAKAKEEE) the composition is skewed to basic and acidic residues. Positions 1–25 (MEAYDQKIAEEEAKAKEEEGVPDEE) are disordered. A coiled-coil region spans residues 71–100 (ESKMEHLAQLRKKFEEDKQRIELLRAQRKF).

It belongs to the RRP7 family.

The protein is Putative ribosomal RNA-processing protein 7 homolog B of Homo sapiens (Human).